The primary structure comprises 138 residues: Small ribosomal subunit protein uS12 (138 aa).

Asp-89 carries the 3-methylthioaspartic acid modification. The tract at residues Ala-101–Lys-138 is disordered. Positions Ala-105–Arg-114 are enriched in polar residues. The span at Gly-125–Lys-138 shows a compositional bias: low complexity.

The protein belongs to the universal ribosomal protein uS12 family. In terms of assembly, part of the 30S ribosomal subunit. Contacts proteins S8 and S17. May interact with IF1 in the 30S initiation complex.

In terms of biological role, with S4 and S5 plays an important role in translational accuracy. Its function is as follows. Interacts with and stabilizes bases of the 16S rRNA that are involved in tRNA selection in the A site and with the mRNA backbone. Located at the interface of the 30S and 50S subunits, it traverses the body of the 30S subunit contacting proteins on the other side and probably holding the rRNA structure together. The combined cluster of proteins S8, S12 and S17 appears to hold together the shoulder and platform of the 30S subunit. This Heliobacterium modesticaldum (strain ATCC 51547 / Ice1) protein is Small ribosomal subunit protein uS12.